An 80-amino-acid chain; its full sequence is uncharacterized protein (80 aa).

Residues 1 to 15 form the signal peptide; it reads MVKLSFTLRFGDVWV.

This is an uncharacterized protein from Archaeoglobus fulgidus (strain ATCC 49558 / DSM 4304 / JCM 9628 / NBRC 100126 / VC-16).